The following is a 444-amino-acid chain: Phosphoglucosamine mutase (444 aa).

The active-site Phosphoserine intermediate is Ser102. 4 residues coordinate Mg(2+): Ser102, Asp241, Asp243, and Asp245. Position 102 is a phosphoserine (Ser102).

The protein belongs to the phosphohexose mutase family. Mg(2+) serves as cofactor. Post-translationally, activated by phosphorylation.

The catalysed reaction is alpha-D-glucosamine 1-phosphate = D-glucosamine 6-phosphate. Functionally, catalyzes the conversion of glucosamine-6-phosphate to glucosamine-1-phosphate. This is Phosphoglucosamine mutase from Paracidovorax citrulli (strain AAC00-1) (Acidovorax citrulli).